The sequence spans 521 residues: Glucose-6-phosphate isomerase (521 aa).

Catalysis depends on E327, which acts as the Proton donor. Residues H358 and K486 contribute to the active site.

It belongs to the GPI family.

Its subcellular location is the cytoplasm. It catalyses the reaction alpha-D-glucose 6-phosphate = beta-D-fructose 6-phosphate. It participates in carbohydrate biosynthesis; gluconeogenesis. Its pathway is carbohydrate degradation; glycolysis; D-glyceraldehyde 3-phosphate and glycerone phosphate from D-glucose: step 2/4. Catalyzes the reversible isomerization of glucose-6-phosphate to fructose-6-phosphate. The protein is Glucose-6-phosphate isomerase of Bordetella bronchiseptica (strain ATCC BAA-588 / NCTC 13252 / RB50) (Alcaligenes bronchisepticus).